The following is a 119-amino-acid chain: Ribonuclease P protein component (119 aa).

The protein belongs to the RnpA family. In terms of assembly, consists of a catalytic RNA component (M1 or rnpB) and a protein subunit.

The catalysed reaction is Endonucleolytic cleavage of RNA, removing 5'-extranucleotides from tRNA precursor.. RNaseP catalyzes the removal of the 5'-leader sequence from pre-tRNA to produce the mature 5'-terminus. It can also cleave other RNA substrates such as 4.5S RNA. The protein component plays an auxiliary but essential role in vivo by binding to the 5'-leader sequence and broadening the substrate specificity of the ribozyme. In Mycobacterium avium (strain 104), this protein is Ribonuclease P protein component.